The chain runs to 351 residues: UDP-3-O-acylglucosamine N-acyltransferase (351 aa).

His240 acts as the Proton acceptor in catalysis.

This sequence belongs to the transferase hexapeptide repeat family. LpxD subfamily. In terms of assembly, homotrimer.

It carries out the reaction a UDP-3-O-[(3R)-3-hydroxyacyl]-alpha-D-glucosamine + a (3R)-hydroxyacyl-[ACP] = a UDP-2-N,3-O-bis[(3R)-3-hydroxyacyl]-alpha-D-glucosamine + holo-[ACP] + H(+). Its pathway is bacterial outer membrane biogenesis; LPS lipid A biosynthesis. Its function is as follows. Catalyzes the N-acylation of UDP-3-O-acylglucosamine using 3-hydroxyacyl-ACP as the acyl donor. Is involved in the biosynthesis of lipid A, a phosphorylated glycolipid that anchors the lipopolysaccharide to the outer membrane of the cell. The chain is UDP-3-O-acylglucosamine N-acyltransferase from Pseudomonas fluorescens (strain Pf0-1).